Consider the following 180-residue polypeptide: uncharacterized protein (180 aa).

It to H.influenzae HI_0656.1.

This is an uncharacterized protein from Escherichia coli (strain K12).